Consider the following 326-residue polypeptide: NADH-ubiquinone oxidoreductase chain 1 (326 aa).

9 helical membrane-spanning segments follow: residues 1–21 (MFLL…LVAV), 41–61 (PNIV…KLFV), 72–92 (IIIF…SWCV), 104–124 (INIG…GIIT), 152–172 (IGLI…TEIV), 177–197 (SIWF…SILA), 234–256 (YANM…LPPF), 268–288 (VWFG…RSSF), and 303–323 (ILLP…LSFN).

This sequence belongs to the complex I subunit 1 family.

The protein localises to the mitochondrion inner membrane. The catalysed reaction is a ubiquinone + NADH + 5 H(+)(in) = a ubiquinol + NAD(+) + 4 H(+)(out). Core subunit of the mitochondrial membrane respiratory chain NADH dehydrogenase (Complex I) that is believed to belong to the minimal assembly required for catalysis. Complex I functions in the transfer of electrons from NADH to the respiratory chain. The immediate electron acceptor for the enzyme is believed to be ubiquinone. This chain is NADH-ubiquinone oxidoreductase chain 1 (ND1), found in Chondrus crispus (Carrageen Irish moss).